Consider the following 210-residue polypeptide: MNITIVDHPLVQHKLGLLREADTSTMKFRQLTQELARLLAYEATRDFELESVTIDGWCGKIDVKQIKGKKVTVVPILRAGIGMLDGVLDLVPSAKISVVGLARNEETLEPVSYFEKFVGNLDERIAIIIDPMLATGGSLVATIDLLKRNGCKHIKAVVMVAAPEGVKIVNDAHPDVQIYAASLDSHLNEHGYIIPGLGDAGDKIFGTKQA.

5-phospho-alpha-D-ribose 1-diphosphate-binding positions include Arg-78, Arg-103, and 130–138 (DPMLATGGS). Residues Ile-193 and 198-200 (GDA) contribute to the uracil site. 5-phospho-alpha-D-ribose 1-diphosphate is bound at residue Asp-199.

It belongs to the UPRTase family. Mg(2+) serves as cofactor.

It carries out the reaction UMP + diphosphate = 5-phospho-alpha-D-ribose 1-diphosphate + uracil. The protein operates within pyrimidine metabolism; UMP biosynthesis via salvage pathway; UMP from uracil: step 1/1. With respect to regulation, allosterically activated by GTP. Its function is as follows. Catalyzes the conversion of uracil and 5-phospho-alpha-D-ribose 1-diphosphate (PRPP) to UMP and diphosphate. In Chromobacterium violaceum (strain ATCC 12472 / DSM 30191 / JCM 1249 / CCUG 213 / NBRC 12614 / NCIMB 9131 / NCTC 9757 / MK), this protein is Uracil phosphoribosyltransferase.